A 277-amino-acid polypeptide reads, in one-letter code: Acyl-coenzyme A thioesterase MBLAC2 (277 aa).

7 residues coordinate Zn(2+): H80, H82, D84, H85, H167, D186, and H228.

The protein belongs to the metallo-beta-lactamase superfamily. Glyoxalase II family. The cofactor is Zn(2+).

It is found in the endoplasmic reticulum membrane. Its subcellular location is the cell membrane. It catalyses the reaction hexadecanoyl-CoA + H2O = hexadecanoate + CoA + H(+). The enzyme catalyses dodecanoyl-CoA + H2O = dodecanoate + CoA + H(+). It carries out the reaction tetradecanoyl-CoA + H2O = tetradecanoate + CoA + H(+). The catalysed reaction is octadecanoyl-CoA + H2O = octadecanoate + CoA + H(+). It catalyses the reaction a beta-lactam + H2O = a substituted beta-amino acid. In terms of biological role, acyl-CoA thioesterases are a group of enzymes that catalyze the hydrolysis of acyl-CoAs to the free fatty acid and coenzyme A (CoASH), providing the potential to regulate intracellular levels of acyl-CoAs, free fatty acids and CoASH. Has an acyl-CoA thioesterase activity towards the long chain fatty acyl-CoA thioester palmitoyl-CoA (hexadecanoyl-CoA; C16:0-CoA). Displays a substrate preference for fatty acyl-CoAs with chain-lengths C12-C18. The polypeptide is Acyl-coenzyme A thioesterase MBLAC2 (MBLAC2) (Gallus gallus (Chicken)).